The following is a 266-amino-acid chain: Diphthine synthase (266 aa).

S-adenosyl-L-methionine contacts are provided by residues Leu-9, Asp-84, Val-87, 112-113, Leu-169, Ala-210, and His-235; that span reads SI.

Belongs to the diphthine synthase family. As to quaternary structure, homodimer.

The enzyme catalyses 2-[(3S)-amino-3-carboxypropyl]-L-histidyl-[translation elongation factor 2] + 3 S-adenosyl-L-methionine = diphthine-[translation elongation factor 2] + 3 S-adenosyl-L-homocysteine + 3 H(+). It functions in the pathway protein modification; peptidyl-diphthamide biosynthesis. Its function is as follows. S-adenosyl-L-methionine-dependent methyltransferase that catalyzes the trimethylation of the amino group of the modified target histidine residue in translation elongation factor 2 (EF-2), to form an intermediate called diphthine. The three successive methylation reactions represent the second step of diphthamide biosynthesis. In Methanosarcina barkeri (strain Fusaro / DSM 804), this protein is Diphthine synthase.